The primary structure comprises 1157 residues: MNRNIFITLLISLLALSGCSGDTCIDPDDFGFIKFNISSRYDPSEVTSRQEGDQVAPWRDSAYKVNGYPLTIMVRPWDYMSGDKNTSGMLSAWCPWYGQQNNFTTLAEFCVRLRPCQFTDGKMCPTPTPRDAPINNAPCILTNGVGLYFLIADKGSNPNMSPDSQRSPKGITQHLGEPVASQDYEFYSISSTGKFLQAGGINYQYGCTSLPCDQASNYAQSSLYFKILDKFYDDNSGQYRVVIKSGVSDTRPDPLQFLTNLIKNELFGTSDKDPGIVRQTYQQIIETPGYRLSVSALLTLYIMFTGFSFLIGNINMTHVELVVRILKVSVVSILLSTSKAWTFFHDYLFVFFVEGLAQILQIVQDASTGQSLLSLLISPQTLSKLFSLLFVDPLGFIYIILYLIALYFIFLLIFKATIIYLTALITIGMIITMAPIFICFMLFNITRSLFENWLRQLISYAIQPIILFVGIAFIGMIIKTEIQSTLGFAVCKKDFPDLGPINQIFGSFTEDLDSSIGNSIFYWWFPVPMKGGIENFTQADILVPEDYTKKDGTKCLAYQCIDKRYIQLPFLDLVKDANRISNFINGKFVQLDGLLLIFVSIYLLSKFNDTAISTASFIAGTSGNLTSIQAVNQQSYDSIMKQVNRPINYATGVISKPINRMQEQTSMFFAEKYQGLMMSRLENKALSSSANKAVQNEVKRKYGIDHKDVNMQAGADYKNGISKLLDNKTFLPKGGDLDVKKLATMNFGQLRDEFAKNKYGAKNYSSLTSDQKLELDKFMKSDLGEKGKSAKSLRELASDANFTRDYQSAYKYAHKEMSGRGVGLFGKNIGVLRSWQEMENRMKTKRELKEQKRVAIGEKIYAGYTGLKRDALTAIVGKDLRDKYEGNLTSAEWHDFDYNDPQLRTYSESLKDKERAREVKELQMQINKETLAVQEDILSPEYLARLKRPSDVEYYQELGQRRLIHEVRDRLSEGSDPVIMGDRFMQEKATDDQMRTMIDNAHQKHAEFIDQDRYTRRQEHYDIMHEKAQENIDRTYKEIKDHFKRDDIKLEEMPALIAQYEREKPIESFDSKTELSLDKRIEEAVSNFNINAKNYEYSASVLNNIEERKQAITDEVNTQIDRINKYRENAKMPQYQKPVENSGRKLRKLEDHLRNMK.

A signal peptide spans 1–18; it reads MNRNIFITLLISLLALSG. A lipid anchor (N-palmitoyl cysteine) is attached at C19. A lipid anchor (S-diacylglycerol cysteine) is attached at C19. The next 4 membrane-spanning stretches (helical) occupy residues 292–312, 394–414, 423–443, and 458–478; these read LSVSALLTLYIMFTGFSFLIG, LGFIYIILYLIALYFIFLLIF, ALITIGMIITMAPIFICFMLF, and ISYAIQPIILFVGIAFIGMII. The segment at 1134 to 1157 is disordered; that stretch reads QYQKPVENSGRKLRKLEDHLRNMK. Basic and acidic residues predominate over residues 1148-1157; the sequence is KLEDHLRNMK.

Belongs to the TrbL/VirB6 family.

The protein resides in the cell membrane. This is an uncharacterized protein from Rickettsia bellii (strain RML369-C).